Reading from the N-terminus, the 195-residue chain is Rac-like GTP-binding protein ARAC4 (195 aa).

Residues 12–19 (GDGAVGKT), 30–37 (FPTDYVPT), 59–63 (DTAGQ), and 117–120 (TKLD) contribute to the GTP site. The short motif at 34–42 (YVPTVFDNF) is the Effector region element. C192 carries the post-translational modification Cysteine methyl ester. The S-geranylgeranyl cysteine moiety is linked to residue C192. The propeptide at 193-195 (AFL) is removed in mature form.

Belongs to the small GTPase superfamily. Rho family. As to quaternary structure, interacts with SPK1, ICR1, ICR5 and PIR. In terms of tissue distribution, ubiquitous.

Its subcellular location is the cytoplasm. It localises to the cell membrane. Its function is as follows. Inactive GDP-bound Rho GTPases reside in the cytosol, are found in a complex with Rho GDP-dissociation inhibitors (Rho GDIs), and are released from the GDI protein in order to translocate to membranes upon activation. Involved in cell polarity control during the actin-dependent tip growth of root hairs, thus regulating root hair length and root hair initiation. Contributes, in a SPK1-dependent manner, to the prevention of cortical microtubules organization into parallel arrays oriented perpendicular to the axis of cell elongation to limit anisotropic cell growth during petal development. May regulate a WAVE complex that activates the Arp2/3 complex. The polypeptide is Rac-like GTP-binding protein ARAC4 (Arabidopsis thaliana (Mouse-ear cress)).